A 370-amino-acid chain; its full sequence is Calcium-binding protein 1 (370 aa).

The interval Met-1–Ala-198 is disordered. Gly-2 is lipidated: N-myristoyl glycine. The S-palmitoyl cysteine moiety is linked to residue Gly-4. Composition is skewed to low complexity over residues His-50–His-61, Lys-68–Arg-84, and Ala-148–Ser-157. 4 EF-hand domains span residues Glu-225–Met-260, Gly-279–Ala-296, Ile-302–His-337, and Val-339–Arg-370. Ca(2+)-binding residues include Asp-238, Asp-240, Asp-242, Tyr-244, and Asp-249. Positions 238, 240, 242, and 244 each coordinate Mg(2+). 4 residues coordinate Ca(2+): Asp-315, Asn-317, Asp-319, and Glu-321. Ser-323 carries the post-translational modification Phosphoserine. The Ca(2+) site is built by Glu-326, Asp-352, Leu-353, Asn-354, Asp-356, Gly-357, Arg-358, Asp-360, and Glu-363.

In terms of assembly, homodimer; when bound to calcium or magnesium. Interacts (via C-terminus) with ITPR1, ITPR2 and ITPR3. This binding is calcium dependent and the interaction correlates with calcium concentration. An additional calcium-independent interaction with the N-terminus of ITPR1 results in a decreased InsP(3) binding to the receptor. Interacts with CACNA1A (via C-terminal CDB motif) in the pre- and postsynaptic membranes. Interacts with CACNA1C (via C-terminal C and IQ motifs). The binding to the C motif is calcium independent whereas the binding to IQ requires the presence of calcium and is mutually exclusive with calmodulin binding. Interacts with CACNA1D. Interacts with TRPC5 (via C-terminus). Interacts (via EF-hands 1 and 2) at microtubules with MAP1LC3B. Interacts with MYO1C. Interacts (via EF-hands 1 and 2) with NSMF (via the central NLS-containing motif region), the interaction occurs in a calcium dependent manner after synaptic NMDA receptor stimulation and prevents nuclear import of NSMF. Interacts with SPACA9. In terms of processing, phosphorylated. The phosphorylation regulates the activity. In terms of tissue distribution, retina and brain. Somatodendritic compartment of neurons. Calbrain was found exclusively in brain where it is abundant in the hippocampus, habenular area in the epithalamus and in the cerebellum.

The protein resides in the cytoplasm. It localises to the cytoskeleton. It is found in the perinuclear region. Its subcellular location is the cell membrane. The protein localises to the golgi apparatus. The protein resides in the postsynaptic density. It localises to the cell cortex. Its function is as follows. Modulates calcium-dependent activity of inositol 1,4,5-triphosphate receptors (ITPRs). Inhibits agonist-induced intracellular calcium signaling. Enhances inactivation and does not support calcium-dependent facilitation of voltage-dependent P/Q-type calcium channels. Causes calcium-dependent facilitation and inhibits inactivation of L-type calcium channels by binding to the same sites as calmodulin in the C-terminal domain of CACNA1C, but has an opposite effect on channel function. Suppresses the calcium-dependent inactivation of CACNA1D. Inhibits TRPC5 channels. Prevents NMDA receptor-induced cellular degeneration. Required for the normal transfer of light signals through the retina. The sequence is that of Calcium-binding protein 1 (CABP1) from Homo sapiens (Human).